The primary structure comprises 498 residues: Glycerol kinase (498 aa).

ADP is bound at residue T12. Positions 12, 13, and 14 each coordinate ATP. T12 contributes to the sn-glycerol 3-phosphate binding site. Residue R16 coordinates ADP. Sn-glycerol 3-phosphate contacts are provided by R82, E83, Y134, and D244. Residues R82, E83, Y134, D244, and Q245 each contribute to the glycerol site. T266 and G309 together coordinate ADP. ATP contacts are provided by T266, G309, Q313, and G410. Residues G410 and N414 each contribute to the ADP site.

The protein belongs to the FGGY kinase family. In terms of assembly, homotetramer and homodimer (in equilibrium).

The enzyme catalyses glycerol + ATP = sn-glycerol 3-phosphate + ADP + H(+). The protein operates within polyol metabolism; glycerol degradation via glycerol kinase pathway; sn-glycerol 3-phosphate from glycerol: step 1/1. With respect to regulation, activated by phosphorylation and inhibited by fructose 1,6-bisphosphate (FBP). In terms of biological role, key enzyme in the regulation of glycerol uptake and metabolism. Catalyzes the phosphorylation of glycerol to yield sn-glycerol 3-phosphate. This Natranaerobius thermophilus (strain ATCC BAA-1301 / DSM 18059 / JW/NM-WN-LF) protein is Glycerol kinase.